We begin with the raw amino-acid sequence, 197 residues long: Rac-like GTP-binding protein ARAC6 (197 aa).

13-20 is a binding site for GTP; the sequence is GDGAVGKT. The Effector region motif lies at 35-43; sequence YVPTVFDNF. Residues 60 to 64 and 118 to 121 each bind GTP; these read DTAGQ and TKLD. GDP is bound at residue Ser160. The residue at position 194 (Cys194) is a Cysteine methyl ester. Cys194 carries S-geranylgeranyl cysteine lipidation. Residues 195–197 constitute a propeptide, removed in mature form; it reads SIL.

The protein belongs to the small GTPase superfamily. Rho family. As to quaternary structure, interacts with SPK1. As to expression, ubiquitous. Preferentially expressed in mature pollen and pollen tubes.

The protein localises to the cytoplasm. Its subcellular location is the membrane. May be involved in cell polarity control during the actin-dependent tip growth of pollen tubes. In terms of biological role, inactive GDP-bound Rho GTPases reside in the cytosol, are found in a complex with Rho GDP-dissociation inhibitors (Rho GDIs), and are released from the GDI protein in order to translocate to membranes upon activation. The chain is Rac-like GTP-binding protein ARAC6 (ARAC6) from Arabidopsis thaliana (Mouse-ear cress).